A 195-amino-acid polypeptide reads, in one-letter code: Probable nicotinate-nucleotide adenylyltransferase (195 aa).

Belongs to the NadD family.

The catalysed reaction is nicotinate beta-D-ribonucleotide + ATP + H(+) = deamido-NAD(+) + diphosphate. It functions in the pathway cofactor biosynthesis; NAD(+) biosynthesis; deamido-NAD(+) from nicotinate D-ribonucleotide: step 1/1. Catalyzes the reversible adenylation of nicotinate mononucleotide (NaMN) to nicotinic acid adenine dinucleotide (NaAD). This Chlorobaculum tepidum (strain ATCC 49652 / DSM 12025 / NBRC 103806 / TLS) (Chlorobium tepidum) protein is Probable nicotinate-nucleotide adenylyltransferase.